A 126-amino-acid chain; its full sequence is Large ribosomal subunit protein uL22 (126 aa).

It belongs to the universal ribosomal protein uL22 family. As to quaternary structure, part of the 50S ribosomal subunit.

This protein binds specifically to 23S rRNA; its binding is stimulated by other ribosomal proteins, e.g. L4, L17, and L20. It is important during the early stages of 50S assembly. It makes multiple contacts with different domains of the 23S rRNA in the assembled 50S subunit and ribosome. In terms of biological role, the globular domain of the protein is located near the polypeptide exit tunnel on the outside of the subunit, while an extended beta-hairpin is found that lines the wall of the exit tunnel in the center of the 70S ribosome. The sequence is that of Large ribosomal subunit protein uL22 from Maricaulis maris (strain MCS10) (Caulobacter maris).